A 169-amino-acid chain; its full sequence is UPF0303 protein BOV_1367 (169 aa).

It belongs to the UPF0303 family.

This chain is UPF0303 protein BOV_1367, found in Brucella ovis (strain ATCC 25840 / 63/290 / NCTC 10512).